Reading from the N-terminus, the 561-residue chain is Bifunctional NAD(P)H-hydrate repair enzyme (561 aa).

The NAD(P)H-hydrate epimerase stretch occupies residues 1–241 (MLSRISERCT…WMIAAERMDA (241 aa)). Residues 29–235 (LRDAEPAAAA…SLGLEEWMIA (207 aa)) form the YjeF N-terminal domain. Positions 77–81 (NNGGD) are NADPHX 1; for epimerase activity. Residues Asn78 and Asp145 each contribute to the K(+) site. The NADPHX 1; for epimerase activity stretch occupies residues 149–155 (GTGISGP). (6S)-NADPHX is bound by residues Tyr160 and Asp178. Ser181 contacts K(+). The region spanning 249-548 (LGDVYGYFST…PRIPFIVNAS (300 aa)) is the YjeF C-terminal domain. The interval 249 to 561 (LGDVYGYFST…SATQQRPSGL (313 aa)) is ADP-dependent (S)-NAD(P)H-hydrate dehydratase. Position 351 (Gly351) interacts with (6S)-NADPHX. Residues 417 to 423 (HPGEAAR) are NADPHX 2; for dehydratase activity. ADP-binding positions include 454–458 (KGPGT) and 475–484 (NAGMASGGMG). Asp485 lines the (6S)-NADPHX pocket.

It in the N-terminal section; belongs to the NnrE/AIBP family. This sequence in the C-terminal section; belongs to the NnrD/CARKD family. It depends on K(+) as a cofactor.

The enzyme catalyses (6S)-NADHX + ADP = AMP + phosphate + NADH + H(+). The catalysed reaction is (6S)-NADPHX + ADP = AMP + phosphate + NADPH + H(+). It carries out the reaction (6R)-NADHX = (6S)-NADHX. It catalyses the reaction (6R)-NADPHX = (6S)-NADPHX. Its function is as follows. Bifunctional enzyme that catalyzes the epimerization of the S- and R-forms of NAD(P)HX and the dehydration of the S-form of NAD(P)HX at the expense of ADP, which is converted to AMP. This allows the repair of both epimers of NAD(P)HX, a damaged form of NAD(P)H that is a result of enzymatic or heat-dependent hydration. The protein is Bifunctional NAD(P)H-hydrate repair enzyme of Leishmania braziliensis.